A 70-amino-acid polypeptide reads, in one-letter code: Disintegrin triflavin (70 aa).

The 70-residue stretch at 1–70 (GEECDCGSPS…SADCPRWNGL (70 aa)) folds into the Disintegrin domain. Disulfide bonds link cysteine 4–cysteine 19, cysteine 6–cysteine 14, cysteine 13–cysteine 36, cysteine 27–cysteine 33, cysteine 32–cysteine 57, and cysteine 45–cysteine 64. Positions 49–51 (RGD) match the Cell attachment site motif.

This sequence belongs to the venom metalloproteinase (M12B) family. P-II subfamily. P-IIa sub-subfamily. Monomer. Expressed by the venom gland.

It localises to the secreted. Its function is as follows. Inhibits fibrinogen interaction with platelets. Acts by binding to alpha-IIb/beta-3 (ITGA2B/ITGB3) on the platelet surface and inhibits aggregation induced by ADP, thrombin, platelet-activating factor and collagen. The chain is Disintegrin triflavin from Protobothrops flavoviridis (Habu).